Here is a 159-residue protein sequence, read N- to C-terminus: Ribosomal RNA large subunit methyltransferase H (159 aa).

S-adenosyl-L-methionine-binding positions include leucine 76, glycine 108, and 127-132 (FSKMTF).

This sequence belongs to the RNA methyltransferase RlmH family. In terms of assembly, homodimer.

Its subcellular location is the cytoplasm. The catalysed reaction is pseudouridine(1915) in 23S rRNA + S-adenosyl-L-methionine = N(3)-methylpseudouridine(1915) in 23S rRNA + S-adenosyl-L-homocysteine + H(+). In terms of biological role, specifically methylates the pseudouridine at position 1915 (m3Psi1915) in 23S rRNA. This is Ribosomal RNA large subunit methyltransferase H from Staphylococcus aureus (strain Mu3 / ATCC 700698).